Consider the following 136-residue polypeptide: Large ribosomal subunit protein uL16 (136 aa).

This sequence belongs to the universal ribosomal protein uL16 family. In terms of assembly, part of the 50S ribosomal subunit.

Functionally, binds 23S rRNA and is also seen to make contacts with the A and possibly P site tRNAs. This is Large ribosomal subunit protein uL16 from Pectobacterium atrosepticum (strain SCRI 1043 / ATCC BAA-672) (Erwinia carotovora subsp. atroseptica).